The chain runs to 292 residues: 33 kDa chaperonin (292 aa).

2 cysteine pairs are disulfide-bonded: Cys-236-Cys-238 and Cys-269-Cys-272.

The protein belongs to the HSP33 family. In terms of processing, under oxidizing conditions two disulfide bonds are formed involving the reactive cysteines. Under reducing conditions zinc is bound to the reactive cysteines and the protein is inactive.

It is found in the cytoplasm. Its function is as follows. Redox regulated molecular chaperone. Protects both thermally unfolding and oxidatively damaged proteins from irreversible aggregation. Plays an important role in the bacterial defense system toward oxidative stress. This Ruminiclostridium cellulolyticum (strain ATCC 35319 / DSM 5812 / JCM 6584 / H10) (Clostridium cellulolyticum) protein is 33 kDa chaperonin.